Here is a 39-residue protein sequence, read N- to C-terminus: Photosystem II reaction center protein J (39 aa).

Residues 7–27 (IPLWLVGLVGGLAVITMLSLF) form a helical membrane-spanning segment.

Belongs to the PsbJ family. As to quaternary structure, PSII is composed of 1 copy each of membrane proteins PsbA, PsbB, PsbC, PsbD, PsbE, PsbF, PsbH, PsbI, PsbJ, PsbK, PsbL, PsbM, PsbT, PsbX, PsbY, PsbZ, Psb30/Ycf12, at least 3 peripheral proteins of the oxygen-evolving complex and a large number of cofactors. It forms dimeric complexes.

Its subcellular location is the plastid. It localises to the chloroplast thylakoid membrane. Its function is as follows. One of the components of the core complex of photosystem II (PSII). PSII is a light-driven water:plastoquinone oxidoreductase that uses light energy to abstract electrons from H(2)O, generating O(2) and a proton gradient subsequently used for ATP formation. It consists of a core antenna complex that captures photons, and an electron transfer chain that converts photonic excitation into a charge separation. In Trieres chinensis (Marine centric diatom), this protein is Photosystem II reaction center protein J.